Consider the following 286-residue polypeptide: NADPH-dependent 7-cyano-7-deazaguanine reductase (286 aa).

88-90 (VES) is a substrate binding site. 90–91 (SK) is an NADPH binding site. Catalysis depends on cysteine 194, which acts as the Thioimide intermediate. The active-site Proton donor is aspartate 201. Position 233 to 234 (233 to 234 (HE)) interacts with substrate. Residue 262-263 (RG) participates in NADPH binding.

The protein belongs to the GTP cyclohydrolase I family. QueF type 2 subfamily. As to quaternary structure, homodimer.

It is found in the cytoplasm. It carries out the reaction 7-aminomethyl-7-carbaguanine + 2 NADP(+) = 7-cyano-7-deazaguanine + 2 NADPH + 3 H(+). The protein operates within tRNA modification; tRNA-queuosine biosynthesis. Its function is as follows. Catalyzes the NADPH-dependent reduction of 7-cyano-7-deazaguanine (preQ0) to 7-aminomethyl-7-deazaguanine (preQ1). The protein is NADPH-dependent 7-cyano-7-deazaguanine reductase of Colwellia psychrerythraea (strain 34H / ATCC BAA-681) (Vibrio psychroerythus).